The following is a 308-amino-acid chain: 1D-myo-inositol 2-acetamido-2-deoxy-alpha-D-glucopyranoside deacetylase (308 aa).

His-37, Asp-40, and His-171 together coordinate Zn(2+).

It belongs to the MshB deacetylase family. Requires Zn(2+) as cofactor.

The catalysed reaction is 1D-myo-inositol 2-acetamido-2-deoxy-alpha-D-glucopyranoside + H2O = 1D-myo-inositol 2-amino-2-deoxy-alpha-D-glucopyranoside + acetate. Functionally, catalyzes the deacetylation of 1D-myo-inositol 2-acetamido-2-deoxy-alpha-D-glucopyranoside (GlcNAc-Ins) in the mycothiol biosynthesis pathway. The sequence is that of 1D-myo-inositol 2-acetamido-2-deoxy-alpha-D-glucopyranoside deacetylase from Mycobacterium sp. (strain JLS).